We begin with the raw amino-acid sequence, 466 residues long: MAKTLYEKVWDSHIVAAPEGEAPLIYVDRHLVHEVTSPQAFSGLKVAGRKLRAPEKTFATMDHNTSTKSASLDALSPMARTQVETLAQNCKEFGVRLYDIHHKNQGIVHVMGPELGITLPGTVIVCGDSHTATHGAFGALAFGIGTSEVEHVMATQTLRQLKAKTMKIEVRGLVADGITAKDIVLAIIGKIGMDGGTGYVVEFCGEAIAALSMEGRMTVCNMAIEMGAKAGMIAPDQTTIDYLEGREFAPKGEAWQQAVAAWKALKSDEDAMFDAHVVLEASDIAPQLTWGTNPGQVVAIDQCVPNPEDETNPTVKASIEKALDYVALTPGTQMTDVSINKVFIGSCTNSRIEDLRSAAQQAKGRKVAAGVTAIVVPGSGLVKEQAEAEGLDKIFIDAGFEWRLPGCSMCLAMNDDRLEAGDRCASTSNRNFEGRQGRGSRTHLVSPAMAAAAAIAGHFVDIRKPY.

[4Fe-4S] cluster is bound by residues Cys347, Cys407, and Cys410.

It belongs to the aconitase/IPM isomerase family. LeuC type 1 subfamily. As to quaternary structure, heterodimer of LeuC and LeuD. Requires [4Fe-4S] cluster as cofactor.

The enzyme catalyses (2R,3S)-3-isopropylmalate = (2S)-2-isopropylmalate. It functions in the pathway amino-acid biosynthesis; L-leucine biosynthesis; L-leucine from 3-methyl-2-oxobutanoate: step 2/4. Catalyzes the isomerization between 2-isopropylmalate and 3-isopropylmalate, via the formation of 2-isopropylmaleate. The protein is 3-isopropylmalate dehydratase large subunit of Shewanella loihica (strain ATCC BAA-1088 / PV-4).